The chain runs to 141 residues: MAARLCCHLDSARDVLLLRPFGPQSSGPSFPRPAAGSAASSASSPSPSDDSDLPLGRLPACFASGSGPCCLVFTCADLRTMDSTVNFVSWHANRQLGMPSKDLWTPYIKDQLLTKWEEGSIDPRLSIFLLGGCRHKCMRLL.

A disordered region spans residues 25–52 (SSGPSFPRPAAGSAASSASSPSPSDDSD). The segment at 68–113 (PCCLVFTCADLRTMDSTVNFVSWHANRQLGMPSKDLWTPYIKDQLL) is mitochondrial targeting sequence.

The protein belongs to the orthohepadnavirus protein X family. In terms of assembly, may form homodimer. May interact with host CEBPA, CFLAR, CREB1, DDB1, E4F1, HBXIP, HSPD1/HSP60, NFKBIA, POLR2E and SMAD4. Interacts with host SMC5-SMC6 complex and induces its degradation. Interacts with host TRPC4AP; leading to prevent ubiquitination of TRPC4AP. Interacts with host PLSCR1; this interaction promotes ubiquitination and degradation of HBx and impairs HBx-mediated cell proliferation. Post-translationally, a fraction may be phosphorylated in insect cells and HepG2 cells, a human hepatoblastoma cell line. Phosphorylated in vitro by host protein kinase C or mitogen-activated protein kinase. N-acetylated in insect cells.

The protein localises to the host cytoplasm. Its subcellular location is the host nucleus. The protein resides in the host mitochondrion. In terms of biological role, multifunctional protein that plays a role in silencing host antiviral defenses and promoting viral transcription. Does not seem to be essential for HBV infection. May be directly involved in development of cirrhosis and liver cancer (hepatocellular carcinoma). Most of cytosolic activities involve modulation of cytosolic calcium. The effect on apoptosis is controversial depending on the cell types in which the studies have been conducted. May induce apoptosis by localizing in mitochondria and causing loss of mitochondrial membrane potential. May also modulate apoptosis by binding host CFLAR, a key regulator of the death-inducing signaling complex (DISC). Promotes viral transcription by using the host E3 ubiquitin ligase DDB1 to target the SMC5-SMC6 complex to proteasomal degradation. This host complex would otherwise bind to viral episomal DNA, and prevents its transcription. Moderately stimulates transcription of many different viral and cellular transcription elements. Promoters and enhancers stimulated by HBx contain DNA binding sites for NF-kappa-B, AP-1, AP-2, c-EBP, ATF/CREB, or the calcium-activated factor NF-AT. In Woodchuck hepatitis B virus (isolate 2) (WHV), this protein is Protein X.